The chain runs to 207 residues: Large ribosomal subunit protein uL4 (207 aa).

Belongs to the universal ribosomal protein uL4 family. Part of the 50S ribosomal subunit.

One of the primary rRNA binding proteins, this protein initially binds near the 5'-end of the 23S rRNA. It is important during the early stages of 50S assembly. It makes multiple contacts with different domains of the 23S rRNA in the assembled 50S subunit and ribosome. Functionally, forms part of the polypeptide exit tunnel. The polypeptide is Large ribosomal subunit protein uL4 (Erythrobacter litoralis (strain HTCC2594)).